The following is a 408-amino-acid chain: Peptidase T (408 aa).

Residue histidine 78 coordinates Zn(2+). Aspartate 80 is an active-site residue. A Zn(2+)-binding site is contributed by aspartate 140. Glutamate 173 functions as the Proton acceptor in the catalytic mechanism. Residues glutamate 174, aspartate 196, and histidine 379 each coordinate Zn(2+).

Belongs to the peptidase M20B family. It depends on Zn(2+) as a cofactor.

It localises to the cytoplasm. The enzyme catalyses Release of the N-terminal residue from a tripeptide.. In terms of biological role, cleaves the N-terminal amino acid of tripeptides. The protein is Peptidase T of Escherichia fergusonii (strain ATCC 35469 / DSM 13698 / CCUG 18766 / IAM 14443 / JCM 21226 / LMG 7866 / NBRC 102419 / NCTC 12128 / CDC 0568-73).